We begin with the raw amino-acid sequence, 360 residues long: Phosphate acyltransferase (360 aa).

It belongs to the PlsX family. Homodimer. Probably interacts with PlsY.

It is found in the cytoplasm. It catalyses the reaction a fatty acyl-[ACP] + phosphate = an acyl phosphate + holo-[ACP]. Its pathway is lipid metabolism; phospholipid metabolism. In terms of biological role, catalyzes the reversible formation of acyl-phosphate (acyl-PO(4)) from acyl-[acyl-carrier-protein] (acyl-ACP). This enzyme utilizes acyl-ACP as fatty acyl donor, but not acyl-CoA. The sequence is that of Phosphate acyltransferase from Caulobacter vibrioides (strain ATCC 19089 / CIP 103742 / CB 15) (Caulobacter crescentus).